The following is a 632-amino-acid chain: 1-deoxy-D-xylulose-5-phosphate synthase (632 aa).

Thiamine diphosphate contacts are provided by residues His79 and 120–122 (GHA). Asp152 contacts Mg(2+). Thiamine diphosphate is bound by residues 153–154 (GA), Asn181, Phe293, and Glu377. A Mg(2+)-binding site is contributed by Asn181.

It belongs to the transketolase family. DXPS subfamily. As to quaternary structure, homodimer. Mg(2+) serves as cofactor. Thiamine diphosphate is required as a cofactor.

It catalyses the reaction D-glyceraldehyde 3-phosphate + pyruvate + H(+) = 1-deoxy-D-xylulose 5-phosphate + CO2. It functions in the pathway metabolic intermediate biosynthesis; 1-deoxy-D-xylulose 5-phosphate biosynthesis; 1-deoxy-D-xylulose 5-phosphate from D-glyceraldehyde 3-phosphate and pyruvate: step 1/1. Its function is as follows. Catalyzes the acyloin condensation reaction between C atoms 2 and 3 of pyruvate and glyceraldehyde 3-phosphate to yield 1-deoxy-D-xylulose-5-phosphate (DXP). The polypeptide is 1-deoxy-D-xylulose-5-phosphate synthase (Parabacteroides distasonis (strain ATCC 8503 / DSM 20701 / CIP 104284 / JCM 5825 / NCTC 11152)).